The chain runs to 102 residues: Citrate lyase acyl carrier protein (102 aa).

S14 carries the post-translational modification O-(phosphoribosyl dephospho-coenzyme A)serine.

It belongs to the CitD family. Oligomer with a subunit composition of (alpha,beta,gamma)6.

The protein resides in the cytoplasm. Its function is as follows. Covalent carrier of the coenzyme of citrate lyase. The chain is Citrate lyase acyl carrier protein from Streptococcus pyogenes serotype M18 (strain MGAS8232).